The following is a 540-amino-acid chain: Transcription initiation factor IIF subunit alpha (540 aa).

A compositionally biased stretch (basic and acidic residues) spans 1-26 (MDSQETKVFENVKQENPDEKKPKVEE). 2 disordered regions span residues 1–39 (MDSQ…QSQQ) and 70–106 (IDPS…SSSN). Polar residues-rich tracts occupy residues 29–39 (SQNNASTQSQQ) and 89–106 (APSS…SSSN). A phosphoserine mark is found at Ser-259 and Ser-261. Positions 280 to 382 (MEGNEEDNKK…REEKLKSRFS (103 aa)) form a coiled coil. Residues 341–416 (YESDEEDEDP…SSQLQSPNTS (76 aa)) are disordered. The segment covering 359–369 (SEEEVLQEEEE) has biased composition (acidic residues). Residues 381–416 (FSANASKTNTPRPLERTPSSVSPVKASSQLQSPNTS) are compositionally biased toward polar residues. Phosphoserine is present on Ser-399.

It belongs to the TFIIF alpha subunit family. As to quaternary structure, component of the fcp1/TFIIF/polII complex via interaction of tfg3 with both tfg1/TFIIF-alpha and tfg2/TFIIF-beta subunits.

It is found in the nucleus. TFIIF is a general transcription initiation factor that binds to RNA polymerase II and helps to recruit it to the initiation complex in collaboration with TFIIB. It promotes transcription elongation. The chain is Transcription initiation factor IIF subunit alpha (tfg1) from Schizosaccharomyces pombe (strain 972 / ATCC 24843) (Fission yeast).